We begin with the raw amino-acid sequence, 517 residues long: Probable bifunctional methylthioribulose-1-phosphate dehydratase/enolase-phosphatase E1 (517 aa).

Positions 1 to 242 are methylthioribulose-1-phosphate dehydratase; sequence MACGGCSCEA…CIKLYQLGID (242 aa). C114 lines the substrate pocket. Zn(2+)-binding residues include H132 and H134. Catalysis depends on E157, which acts as the Proton donor/acceptor; for methylthioribulose-1-phosphate dehydratase activity. Position 207 (H207) interacts with Zn(2+). Positions 278–517 are enolase-phosphatase E1; sequence VVLDIEGTTT…FRTIKSFSEI (240 aa). Residues D281 and E283 each contribute to the Mg(2+) site. Substrate-binding positions include 416–417 and K450; that span reads SS. D476 lines the Mg(2+) pocket.

It in the N-terminal section; belongs to the aldolase class II family. MtnB subfamily. The protein in the C-terminal section; belongs to the HAD-like hydrolase superfamily. MasA/MtnC family. It depends on Zn(2+) as a cofactor. Mg(2+) is required as a cofactor.

The enzyme catalyses 5-(methylsulfanyl)-D-ribulose 1-phosphate = 5-methylsulfanyl-2,3-dioxopentyl phosphate + H2O. The catalysed reaction is 5-methylsulfanyl-2,3-dioxopentyl phosphate + H2O = 1,2-dihydroxy-5-(methylsulfanyl)pent-1-en-3-one + phosphate. It functions in the pathway amino-acid biosynthesis; L-methionine biosynthesis via salvage pathway; L-methionine from S-methyl-5-thio-alpha-D-ribose 1-phosphate: step 2/6. It participates in amino-acid biosynthesis; L-methionine biosynthesis via salvage pathway; L-methionine from S-methyl-5-thio-alpha-D-ribose 1-phosphate: step 3/6. Its pathway is amino-acid biosynthesis; L-methionine biosynthesis via salvage pathway; L-methionine from S-methyl-5-thio-alpha-D-ribose 1-phosphate: step 4/6. In Sorghum bicolor (Sorghum), this protein is Probable bifunctional methylthioribulose-1-phosphate dehydratase/enolase-phosphatase E1.